The sequence spans 333 residues: Holliday junction branch migration complex subunit RuvB (333 aa).

The tract at residues Met1–Tyr182 is large ATPase domain (RuvB-L). ATP contacts are provided by residues Leu21, Arg22, Gly63, Lys66, Thr67, Thr68, Glu129 to Phe131, Arg172, Tyr182, and Arg219. Mg(2+) is bound at residue Thr67. Residues Thr183–Gln253 are small ATPAse domain (RuvB-S). Residues Lys256 to Val333 form a head domain (RuvB-H) region. Arg311 and Arg316 together coordinate DNA.

It belongs to the RuvB family. Homohexamer. Forms an RuvA(8)-RuvB(12)-Holliday junction (HJ) complex. HJ DNA is sandwiched between 2 RuvA tetramers; dsDNA enters through RuvA and exits via RuvB. An RuvB hexamer assembles on each DNA strand where it exits the tetramer. Each RuvB hexamer is contacted by two RuvA subunits (via domain III) on 2 adjacent RuvB subunits; this complex drives branch migration. In the full resolvosome a probable DNA-RuvA(4)-RuvB(12)-RuvC(2) complex forms which resolves the HJ.

It localises to the cytoplasm. It catalyses the reaction ATP + H2O = ADP + phosphate + H(+). Functionally, the RuvA-RuvB-RuvC complex processes Holliday junction (HJ) DNA during genetic recombination and DNA repair, while the RuvA-RuvB complex plays an important role in the rescue of blocked DNA replication forks via replication fork reversal (RFR). RuvA specifically binds to HJ cruciform DNA, conferring on it an open structure. The RuvB hexamer acts as an ATP-dependent pump, pulling dsDNA into and through the RuvAB complex. RuvB forms 2 homohexamers on either side of HJ DNA bound by 1 or 2 RuvA tetramers; 4 subunits per hexamer contact DNA at a time. Coordinated motions by a converter formed by DNA-disengaged RuvB subunits stimulates ATP hydrolysis and nucleotide exchange. Immobilization of the converter enables RuvB to convert the ATP-contained energy into a lever motion, pulling 2 nucleotides of DNA out of the RuvA tetramer per ATP hydrolyzed, thus driving DNA branch migration. The RuvB motors rotate together with the DNA substrate, which together with the progressing nucleotide cycle form the mechanistic basis for DNA recombination by continuous HJ branch migration. Branch migration allows RuvC to scan DNA until it finds its consensus sequence, where it cleaves and resolves cruciform DNA. The sequence is that of Holliday junction branch migration complex subunit RuvB from Bacillus cereus (strain ATCC 10987 / NRS 248).